A 96-amino-acid chain; its full sequence is Co-chaperonin GroES (96 aa).

It belongs to the GroES chaperonin family. As to quaternary structure, heptamer of 7 subunits arranged in a ring. Interacts with the chaperonin GroEL.

The protein localises to the cytoplasm. Its function is as follows. Together with the chaperonin GroEL, plays an essential role in assisting protein folding. The GroEL-GroES system forms a nano-cage that allows encapsulation of the non-native substrate proteins and provides a physical environment optimized to promote and accelerate protein folding. GroES binds to the apical surface of the GroEL ring, thereby capping the opening of the GroEL channel. This Actinobacillus pleuropneumoniae serotype 7 (strain AP76) protein is Co-chaperonin GroES.